We begin with the raw amino-acid sequence, 236 residues long: B-cell antigen receptor complex-associated protein alpha chain (236 aa).

Residues 1-32 form the signal peptide; sequence MPGGPGLLQALCATTFLLFLISAGGLGPGSQA. Positions 33–122 constitute an Ig-like C2-type domain; that stretch reads LWVDGGPPSM…EKDLNQKILS (90 aa). Over 33 to 151 the chain is Extracellular; sequence LWVDGGPPSM…LDMGEGTKNN (119 aa). A disulfide bridge connects residues Cys54 and Cys109. N-linked (GlcNAc...) asparagine glycans are attached at residues Asn66 and Asn76. A helical membrane pass occupies residues 152-172; the sequence is IITAEGIILLFCAVVPGTLLL. The Cytoplasmic portion of the chain corresponds to 173 to 236; the sequence is FRKRWQNMKF…GDGDVQLEKP (64 aa). The ITAM domain maps to 185 to 213; that stretch reads DAQDDYEDENLYEGLNLDDCSMYEDISRG. Residue Tyr196 is modified to Phosphotyrosine; by SRC-type Tyr-kinases. Residue Tyr207 is modified to Phosphotyrosine. At Arg212 the chain carries Asymmetric dimethylarginine; by PRMT1. Phosphotyrosine; by Tyr-kinases is present on Tyr218.

Heterodimer of alpha and beta chains; disulfide-linked. Part of the B-cell antigen receptor complex where the alpha/beta chain heterodimer is non-covalently associated with an antigen-specific membrane-bound surface immunoglobulin of two heavy chains and two light chains. Interacts through its phosphorylated ITAM domain with the SH2 domains of SYK which stimulates SYK autophosphorylation and activation. Also interacts, when phosphorylated on Tyr-207, with the SH2 domain of BLNK/SLP65, bringing BLNK into proximity with SYK and allowing SYK to phosphorylate BLNK which is necessary for trafficking of the BCR to late endosomes. Interacts with Src-family tyrosine kinases including FYN and LYN, increasing their activity. Phosphorylated on tyrosine, serine and threonine residues upon B-cell activation. Phosphorylation of tyrosine residues by Src-family kinases, including LYN, is an early and essential feature of the BCR signaling cascade. The phosphorylated tyrosines serve as docking sites for SH2-domain containing kinases, leading to their activation which in turn leads to phosphorylation of downstream targets. Phosphorylation of serine and threonine residues may prevent subsequent tyrosine phosphorylation. Post-translationally, arginine methylation in the ITAM domain may interfere with the binding of SYK. It promotes signals leading to B-cell differentiation.

The protein localises to the cell membrane. Functionally, required in cooperation with CD79B for initiation of the signal transduction cascade activated by binding of antigen to the B-cell antigen receptor complex (BCR) which leads to internalization of the complex, trafficking to late endosomes and antigen presentation. Also required for BCR surface expression and for efficient differentiation of pro- and pre-B-cells. Stimulates SYK autophosphorylation and activation. Binds to BLNK, bringing BLNK into proximity with SYK and allowing SYK to phosphorylate BLNK. Also interacts with and increases activity of some Src-family tyrosine kinases. Represses BCR signaling during development of immature B-cells. The sequence is that of B-cell antigen receptor complex-associated protein alpha chain (CD79A) from Canis lupus familiaris (Dog).